The following is a 202-amino-acid chain: Small ribosomal subunit protein uS4 (202 aa).

Positions 1-13 are enriched in basic residues; that stretch reads MSRYRGPRLRVTR. The disordered stretch occupies residues 1-42; it reads MSRYRGPRLRVTRRLGELPGLTRKASKKSNPPGQHGQARRKR. The S4 RNA-binding domain occupies 90-152; sequence NRLDNVCFRL…KASKKLVEGN (63 aa).

The protein belongs to the universal ribosomal protein uS4 family. As to quaternary structure, part of the 30S ribosomal subunit. Contacts protein S5. The interaction surface between S4 and S5 is involved in control of translational fidelity.

Functionally, one of the primary rRNA binding proteins, it binds directly to 16S rRNA where it nucleates assembly of the body of the 30S subunit. In terms of biological role, with S5 and S12 plays an important role in translational accuracy. This is Small ribosomal subunit protein uS4 from Prochlorococcus marinus (strain MIT 9312).